The chain runs to 209 residues: uncharacterized protein (209 aa).

Residues 1 to 67 (MEILPKYKPE…LIMYNYWTID (67 aa)) form the MPN domain. Positions 17, 19, and 30 each coordinate Zn(2+). Residues 17-30 (HTHPKGPAEPSIND) carry the JAMM motif motif.

This is an uncharacterized protein from Acidianus convivator (ATV).